The primary structure comprises 244 residues: DNA repair protein RecO (244 aa).

Belongs to the RecO family.

Functionally, involved in DNA repair and RecF pathway recombination. The chain is DNA repair protein RecO from Jannaschia sp. (strain CCS1).